The primary structure comprises 548 residues: MIRRQTNDRTTNRRRPKLWQNCKNIRTLKQIHASMVVNGLMSNLSVVGELIYSASLSVPGALKYAHKLFDEIPKPDVSICNHVLRGSAQSMKPEKTVSLYTEMEKRGVSPDRYTFTFVLKACSKLEWRSNGFAFHGKVVRHGFVLNEYVKNALILFHANCGDLGIASELFDDSAKAHKVAWSSMTSGYAKRGKIDEAMRLFDEMPYKDQVAWNVMITGCLKCKEMDSARELFDRFTEKDVVTWNAMISGYVNCGYPKEALGIFKEMRDAGEHPDVVTILSLLSACAVLGDLETGKRLHIYILETASVSSSIYVGTPIWNALIDMYAKCGSIDRAIEVFRGVKDRDLSTWNTLIVGLALHHAEGSIEMFEEMQRLKVWPNEVTFIGVILACSHSGRVDEGRKYFSLMRDMYNIEPNIKHYGCMVDMLGRAGQLEEAFMFVESMKIEPNAIVWRTLLGACKIYGNVELGKYANEKLLSMRKDESGDYVLLSNIYASTGQWDGVQKVRKMFDDTRVKKPTGVSLIEEDDDKLMMRYLLSSEPESRSRGRIN.

11 PPR repeats span residues 76–110, 111–145, 146–176, 177–211, 212–238, 239–273, 274–308, 314–348, 349–378, 379–409, and 415–445; these read DVSI…GVSP, DRYT…GFVL, NEYV…SAKA, HKVA…DQVA, WNVM…FTEK, DVVT…GEHP, DVVT…ASVS, GTPI…DLST, WNTL…KVWP, NEVT…MRDM, and NIKH…MKIE. Positions 450 to 525 are type E motif; the sequence is VWRTLLGACK…PTGVSLIEED (76 aa).

It belongs to the PPR family. PCMP-E subfamily.

The sequence is that of Pentatricopeptide repeat-containing protein At5g15300 (PCMP-E40) from Arabidopsis thaliana (Mouse-ear cress).